Here is a 517-residue protein sequence, read N- to C-terminus: 2,3-bisphosphoglycerate-independent phosphoglycerate mutase (517 aa).

Positions 14 and 64 each coordinate Mn(2+). S64 (phosphoserine intermediate) is an active-site residue. Residues H125, R155 to D156, R187, R193, R259 to R262, and K334 each bind substrate. Mn(2+)-binding residues include D401, H405, D442, H443, and H461.

It belongs to the BPG-independent phosphoglycerate mutase family. In terms of assembly, monomer. The cofactor is Mn(2+).

The enzyme catalyses (2R)-2-phosphoglycerate = (2R)-3-phosphoglycerate. It participates in carbohydrate degradation; glycolysis; pyruvate from D-glyceraldehyde 3-phosphate: step 3/5. In terms of biological role, catalyzes the interconversion of 2-phosphoglycerate and 3-phosphoglycerate. This Symbiobacterium thermophilum (strain DSM 24528 / JCM 14929 / IAM 14863 / T) protein is 2,3-bisphosphoglycerate-independent phosphoglycerate mutase.